The following is a 614-amino-acid chain: MKGLSSLINRKKDRNDSHLDEIENGVNATEFNSIEMEEQGKKSDFDLSHLEYGPGSLIPNDNNEEVPDLLDEAMQDAKEADESERGMPLMTALKTYPKAAAWSLLVSTTLIQEGYDTAILGAFYALPVFQKKYGSLNSNTGDYEISVSWQIGLCLCYMAGEIVGLQMTGPSVDYMGNRYTLIMALFFLAAFIFILYFCKSLGMIAVGQALCGMPWGCFQCLTVSYASEICPLALRYYLTTYSNLCWAFGQLFAAGIMKNSQNKYANSELGYKLPFALQWIWPLPLAVGIFFAPESPWWLVKKGRIDQARRSLERTLSGKGPEKELLVSMELDKIKTTIEKEQKMSDEGTYWDCVKDGINRRRTRIACLCWIGQCSCGASLIGYSTYFYEKAGVSTDTAFTFSIIQYCLGIAATFISWWASKYCGRFDLYAFGLAFQAIMFFIIGGLGCSDTHGAKMGSGALLMVVAFFYNLGIAPVVFCLVSEIPSSRLRTKTIILARNAYNVIQVVVTVLIMYQLNSEKWNWGAKSGFFWGGFCLATLAWAVVDLPETAGRTFIEINELFRLGVPARKFKSTKVDPFAAAKAAAAEINVKDPKEDLETSVVDEGRNTSSVVNK.

A disordered region spans residues 1–48 (MKGLSSLINRKKDRNDSHLDEIENGVNATEFNSIEMEEQGKKSDFDLS). The Cytoplasmic segment spans residues 1–108 (MKGLSSLINR…AAAWSLLVST (108 aa)). Basic and acidic residues predominate over residues 38–48 (EQGKKSDFDLS). The helical transmembrane segment at 109-129 (TLIQEGYDTAILGAFYALPVF) threads the bilayer. Over 130–144 (QKKYGSLNSNTGDYE) the chain is Extracellular. A helical transmembrane segment spans residues 145–165 (ISVSWQIGLCLCYMAGEIVGL). Residues 166 to 180 (QMTGPSVDYMGNRYT) are Cytoplasmic-facing. A helical membrane pass occupies residues 181–201 (LIMALFFLAAFIFILYFCKSL). A topological domain (extracellular) is located at residue glycine 202. A helical transmembrane segment spans residues 203 to 223 (MIAVGQALCGMPWGCFQCLTV). The Cytoplasmic portion of the chain corresponds to 224–236 (SYASEICPLALRY). Residues 237-257 (YLTTYSNLCWAFGQLFAAGIM) form a helical membrane-spanning segment. Topologically, residues 258 to 272 (KNSQNKYANSELGYK) are extracellular. The helical transmembrane segment at 273 to 293 (LPFALQWIWPLPLAVGIFFAP) threads the bilayer. At 294-364 (ESPWWLVKKG…KDGINRRRTR (71 aa)) the chain is on the cytoplasmic side. A helical membrane pass occupies residues 365-385 (IACLCWIGQCSCGASLIGYST). The Extracellular portion of the chain corresponds to 386 to 398 (YFYEKAGVSTDTA). The helical transmembrane segment at 399-419 (FTFSIIQYCLGIAATFISWWA) threads the bilayer. Residues 420-427 (SKYCGRFD) lie on the Cytoplasmic side of the membrane. The helical transmembrane segment at 428–448 (LYAFGLAFQAIMFFIIGGLGC) threads the bilayer. The Extracellular portion of the chain corresponds to 449 to 460 (SDTHGAKMGSGA). A helical transmembrane segment spans residues 461–481 (LLMVVAFFYNLGIAPVVFCLV). Over 482–493 (SEIPSSRLRTKT) the chain is Cytoplasmic. Residues 494–514 (IILARNAYNVIQVVVTVLIMY) traverse the membrane as a helical segment. The Extracellular segment spans residues 515-526 (QLNSEKWNWGAK). A helical transmembrane segment spans residues 527–547 (SGFFWGGFCLATLAWAVVDLP). Residues 548 to 614 (ETAGRTFIEI…GRNTSSVVNK (67 aa)) are Cytoplasmic-facing. Residues 595-614 (EDLETSVVDEGRNTSSVVNK) form a disordered region.

The protein belongs to the major facilitator superfamily. Sugar transporter (TC 2.A.1.1) family.

Its subcellular location is the membrane. In terms of biological role, high-affinity uptake of maltose and maltotriose. Also transports turanose but not alpha-methylglucoside, melezitose or trehalose. This chain is Maltose permease MAL31 (MAL31), found in Saccharomyces cerevisiae (strain ATCC 204508 / S288c) (Baker's yeast).